Reading from the N-terminus, the 452-residue chain is Pup--protein ligase (452 aa).

Mg(2+) is bound at residue Glu9. Residue Arg53 coordinates ATP. Mg(2+) is bound at residue Tyr55. The Proton acceptor role is filled by Asp57. Glu63 serves as a coordination point for Mg(2+). Residues Thr66 and Trp419 each coordinate ATP.

This sequence belongs to the Pup ligase/Pup deamidase family. Pup-conjugating enzyme subfamily.

It carries out the reaction ATP + [prokaryotic ubiquitin-like protein]-L-glutamate + [protein]-L-lysine = ADP + phosphate + N(6)-([prokaryotic ubiquitin-like protein]-gamma-L-glutamyl)-[protein]-L-lysine.. It functions in the pathway protein degradation; proteasomal Pup-dependent pathway. It participates in protein modification; protein pupylation. Catalyzes the covalent attachment of the prokaryotic ubiquitin-like protein modifier Pup to the proteasomal substrate proteins, thereby targeting them for proteasomal degradation. This tagging system is termed pupylation. The ligation reaction involves the side-chain carboxylate of the C-terminal glutamate of Pup and the side-chain amino group of a substrate lysine. This chain is Pup--protein ligase, found in Geodermatophilus obscurus (strain ATCC 25078 / DSM 43160 / JCM 3152 / CCUG 61914 / KCC A-0152 / KCTC 9177 / NBRC 13315 / NRRL B-3577 / G-20).